The sequence spans 112 residues: Nucleoid-associated protein CV_1611 (112 aa).

It belongs to the YbaB/EbfC family. As to quaternary structure, homodimer.

The protein resides in the cytoplasm. The protein localises to the nucleoid. Functionally, binds to DNA and alters its conformation. May be involved in regulation of gene expression, nucleoid organization and DNA protection. The chain is Nucleoid-associated protein CV_1611 from Chromobacterium violaceum (strain ATCC 12472 / DSM 30191 / JCM 1249 / CCUG 213 / NBRC 12614 / NCIMB 9131 / NCTC 9757 / MK).